We begin with the raw amino-acid sequence, 288 residues long: Ribosomal RNA small subunit methyltransferase A (288 aa).

Positions 1–14 (MSKNQGGNKHQGGS) are enriched in polar residues. The tract at residues 1-21 (MSKNQGGNKHQGGSKTHLGHR) is disordered. Positions 29, 31, 56, 77, 102, and 122 each coordinate S-adenosyl-L-methionine.

Belongs to the class I-like SAM-binding methyltransferase superfamily. rRNA adenine N(6)-methyltransferase family. RsmA subfamily.

The protein resides in the cytoplasm. The enzyme catalyses adenosine(1518)/adenosine(1519) in 16S rRNA + 4 S-adenosyl-L-methionine = N(6)-dimethyladenosine(1518)/N(6)-dimethyladenosine(1519) in 16S rRNA + 4 S-adenosyl-L-homocysteine + 4 H(+). In terms of biological role, specifically dimethylates two adjacent adenosines (A1518 and A1519) in the loop of a conserved hairpin near the 3'-end of 16S rRNA in the 30S particle. May play a critical role in biogenesis of 30S subunits. The polypeptide is Ribosomal RNA small subunit methyltransferase A (Idiomarina loihiensis (strain ATCC BAA-735 / DSM 15497 / L2-TR)).